The primary structure comprises 468 residues: Serine/threonine-protein kinase ULK3 (468 aa).

In terms of domain architecture, Protein kinase spans 13 to 269 (FILTEKLGSG…FIEFFAHLFV (257 aa)). Residues 19–27 (LGSGSYATV) and Lys43 contribute to the ATP site. Asp136 (proton acceptor) is an active-site residue. 2 MIT domains span residues 279-347 (TLEK…KVLV) and 374-442 (RLFS…KEQM).

It belongs to the protein kinase superfamily. Ser/Thr protein kinase family. APG1/unc-51/ULK1 subfamily.

The protein localises to the cytoplasm. The enzyme catalyses L-seryl-[protein] + ATP = O-phospho-L-seryl-[protein] + ADP + H(+). The catalysed reaction is L-threonyl-[protein] + ATP = O-phospho-L-threonyl-[protein] + ADP + H(+). Serine/threonine protein kinase that acts as a regulator of Sonic hedgehog (SHH) signaling and autophagy. The protein is Serine/threonine-protein kinase ULK3 (ulk3) of Xenopus laevis (African clawed frog).